We begin with the raw amino-acid sequence, 274 residues long: uncharacterized protein (274 aa).

The N-terminal stretch at 1–21 (MRKLTLLPLLLIITGLLTVQA) is a signal peptide. The chain crosses the membrane as a helical span at residues 249 to 266 (TSAFVILTASALIFIYLF).

It localises to the membrane. This is an uncharacterized protein from Archaeoglobus fulgidus (strain ATCC 49558 / DSM 4304 / JCM 9628 / NBRC 100126 / VC-16).